A 213-amino-acid polypeptide reads, in one-letter code: GTP-binding protein YPTC4 (213 aa).

Position 13–21 (G13–C21) interacts with GTP. The short motif at H35–F43 is the Effector region element. Residues D61–Q65, N119–D122, and S149–R151 each bind GTP. Residues A194–C213 are disordered. S-geranylgeranyl cysteine attachment occurs at residues C212 and C213.

Belongs to the small GTPase superfamily. Rab family.

It is found in the cell membrane. In terms of biological role, protein transport. Probably involved in vesicular traffic. In Chlamydomonas reinhardtii (Chlamydomonas smithii), this protein is GTP-binding protein YPTC4 (YPTC4).